A 510-amino-acid polypeptide reads, in one-letter code: Membrane-bound transcription factor site-2 protease (510 aa).

The Cytoplasmic segment spans residues 1 to 3 (MIP). A helical membrane pass occupies residues 4–24 (VSLVVVVVGGWTAVYLADLVL). Residues 25–74 (KSSVYFKHSYEDWLEKNGLSISPFHIRWQTSVFNRAFYSWGRRKARMLYQ) lie on the Lumenal side of the membrane. 2 helical membrane-spanning segments follow: residues 75 to 95 (WFNF…FLLG) and 96 to 107 (KTLMQTLAQMMA). Topologically, residues 108–135 (DSPSSSSSSSSSSSSSSSSSIHNEQVLQ) are lumenal. A helical membrane pass occupies residues 136 to 160 (VVVPGINLPVNQLTYFFAAVLISGV). His162 is a Zn(2+) binding site. Glu163 is a catalytic residue. 3 consecutive transmembrane segments (helical) span residues 165–177 (GHGI…QVRF), 178–200 (NGFG…TTHL), and 220–242 (FVLA…PFYY). His166 serves as a coordination point for Zn(2+). At 243-437 (TGVGVLITEV…LPVIVETFVK (195 aa)) the chain is on the lumenal side. Asn328 carries N-linked (GlcNAc...) asparagine glycosylation. Transmembrane regions (helical) follow at residues 438–455 (YLIS…VPCF) and 456–467 (ALDGQWILNSFL). The Lumenal segment spans residues 468 to 483 (DATLTSVIGDNDVKDL). Residues 484–504 (IGFFILLGGSVLLAANVTLGL) traverse the membrane as a helical segment. Residues 505–510 (WMVTAR) lie on the Cytoplasmic side of the membrane.

Belongs to the peptidase M50A family. The cofactor is Zn(2+).

The protein resides in the membrane. It is found in the cytoplasm. It localises to the golgi apparatus membrane. The catalysed reaction is Cleaves several transcription factors that are type-2 transmembrane proteins within membrane-spanning domains. Known substrates include sterol regulatory element-binding protein (SREBP) -1, SREBP-2 and forms of the transcriptional activator ATF6. SREBP-2 is cleaved at the site 477-DRSRILL-|-CVLTFLCLSFNPLTSLLQWGGA-505. The residues Asn-Pro, 11 residues distal to the site of cleavage in the membrane-spanning domain, are important for cleavage by S2P endopeptidase. Replacement of either of these residues does not prevent cleavage, but there is no cleavage if both of these residues are replaced.. Functionally, zinc metalloprotease that mediates intramembrane proteolysis of proteins such as ATF6, ATF6B, SREBF1/SREBP1 and SREBF2/SREBP2. Catalyzes the second step in the proteolytic activation of the sterol regulatory element-binding proteins (SREBPs) SREBF1/SREBP1 and SREBF2/SREBP2: cleaves SREBPs within the first transmembrane segment, thereby releasing the N-terminal segment with a portion of the transmembrane segment attached. Mature N-terminal SREBP fragments shuttle to the nucleus and activate gene transcription. Also mediates the second step in the proteolytic activation of the cyclic AMP-dependent transcription factor ATF-6 (ATF6 and ATF6B). Involved in intramembrane proteolysis during bone formation. In astrocytes and osteoblasts, upon DNA damage and ER stress, mediates the second step of the regulated intramembrane proteolytic activation of the transcription factor CREB3L1, leading to the inhibition of cell-cycle progression. The polypeptide is Membrane-bound transcription factor site-2 protease (MBTPS2) (Cricetulus griseus (Chinese hamster)).